The following is a 657-amino-acid chain: ABC1 family protein YPL109C, mitochondrial (657 aa).

Residues 1–15 (MSFLKFAYRNSWRYY) constitute a mitochondrion transit peptide.

The protein belongs to the protein kinase superfamily. ADCK protein kinase family.

It localises to the mitochondrion. The chain is ABC1 family protein YPL109C, mitochondrial from Saccharomyces cerevisiae (strain ATCC 204508 / S288c) (Baker's yeast).